The following is a 766-amino-acid chain: FYVE, RhoGEF and PH domain-containing protein 4 (766 aa).

The tract at residues 1 to 150 (MEESNPAPTS…SSVTNSHDEN (150 aa)) is actin filament-binding. 3 stretches are compositionally biased toward polar residues: residues 43–65 (STMN…TPQK), 132–145 (RNET…SVTN), and 152–161 (CDSSCRTQGT). The tract at residues 43–167 (STMNLNIPQT…TQGTDLGLPS (125 aa)) is disordered. The DH domain maps to 206 to 393 (KLHKIATELL…STAASHSNSA (188 aa)). A PH 1 domain is found at 422-521 (ELIKEGQILK…WIKALQESID (100 aa)). The FYVE-type zinc finger occupies 559–619 (DNEVTMCMKC…VCKDCYQIMS (61 aa)). The Zn(2+) site is built by cysteine 565, cysteine 568, cysteine 582, cysteine 585, cysteine 590, cysteine 593, cysteine 611, and cysteine 614. The PH 2 domain maps to 643 to 740 (NSEVCSFLQY…WLKIILLAVT (98 aa)). 2 positions are modified to phosphoserine: serine 702 and serine 716. A disordered region spans residues 745-766 (DGPSEHLDTLDNLPGPKEKSEC).

Homooligomer. As to expression, detected in brain, lung, liver, skeletal muscle, kidney, testis and cultured hippocampal neurons.

The protein resides in the cytoplasm. It is found in the cytoskeleton. Its subcellular location is the cell projection. It localises to the filopodium. Its function is as follows. Activates CDC42, a member of the Ras-like family of Rho- and Rac proteins, by exchanging bound GDP for free GTP. Plays a role in regulating the actin cytoskeleton and cell shape. Activates MAPK8. This is FYVE, RhoGEF and PH domain-containing protein 4 (Fgd4) from Rattus norvegicus (Rat).